The chain runs to 282 residues: 4-hydroxy-3-methylbut-2-enyl diphosphate reductase (282 aa).

Residue cysteine 14 coordinates [4Fe-4S] cluster. Histidine 43 and histidine 78 together coordinate (2E)-4-hydroxy-3-methylbut-2-enyl diphosphate. Residues histidine 43 and histidine 78 each contribute to the dimethylallyl diphosphate site. Residues histidine 43 and histidine 78 each contribute to the isopentenyl diphosphate site. Cysteine 100 contacts [4Fe-4S] cluster. Histidine 128 lines the (2E)-4-hydroxy-3-methylbut-2-enyl diphosphate pocket. Position 128 (histidine 128) interacts with dimethylallyl diphosphate. Histidine 128 contributes to the isopentenyl diphosphate binding site. Catalysis depends on glutamate 130, which acts as the Proton donor. Residue threonine 164 coordinates (2E)-4-hydroxy-3-methylbut-2-enyl diphosphate. [4Fe-4S] cluster is bound at residue cysteine 192. Residues serine 220, serine 221, asparagine 222, and serine 266 each coordinate (2E)-4-hydroxy-3-methylbut-2-enyl diphosphate. The dimethylallyl diphosphate site is built by serine 220, serine 221, asparagine 222, and serine 266. The isopentenyl diphosphate site is built by serine 220, serine 221, asparagine 222, and serine 266.

Belongs to the IspH family. [4Fe-4S] cluster serves as cofactor.

The enzyme catalyses isopentenyl diphosphate + 2 oxidized [2Fe-2S]-[ferredoxin] + H2O = (2E)-4-hydroxy-3-methylbut-2-enyl diphosphate + 2 reduced [2Fe-2S]-[ferredoxin] + 2 H(+). The catalysed reaction is dimethylallyl diphosphate + 2 oxidized [2Fe-2S]-[ferredoxin] + H2O = (2E)-4-hydroxy-3-methylbut-2-enyl diphosphate + 2 reduced [2Fe-2S]-[ferredoxin] + 2 H(+). Its pathway is isoprenoid biosynthesis; dimethylallyl diphosphate biosynthesis; dimethylallyl diphosphate from (2E)-4-hydroxy-3-methylbutenyl diphosphate: step 1/1. It functions in the pathway isoprenoid biosynthesis; isopentenyl diphosphate biosynthesis via DXP pathway; isopentenyl diphosphate from 1-deoxy-D-xylulose 5-phosphate: step 6/6. In terms of biological role, catalyzes the conversion of 1-hydroxy-2-methyl-2-(E)-butenyl 4-diphosphate (HMBPP) into a mixture of isopentenyl diphosphate (IPP) and dimethylallyl diphosphate (DMAPP). Acts in the terminal step of the DOXP/MEP pathway for isoprenoid precursor biosynthesis. The chain is 4-hydroxy-3-methylbut-2-enyl diphosphate reductase from Clostridium perfringens (strain SM101 / Type A).